The following is a 450-amino-acid chain: Molybdate-anion transporter (450 aa).

The next 12 membrane-spanning stretches (helical) occupy residues 1-21 (MLVT…GLEL), 43-63 (LDFY…APYL), 79-99 (ILYV…SSLV), 128-148 (FVLL…FSAF), 174-194 (AAFW…AVAS), 195-215 (WIGL…ALAG), 249-269 (VLLL…FVFL), 278-298 (GAPL…GSSL), 311-331 (PMHL…MLTF), 344-364 (FIAF…MSFL), 376-396 (GVLN…LLVL), and 409-429 (FSIC…LFTV).

The protein belongs to the major facilitator superfamily.

It is found in the cell membrane. Functionally, mediates high-affinity intracellular uptake of the rare oligo-element molybdenum. This Pongo abelii (Sumatran orangutan) protein is Molybdate-anion transporter (MFSD5).